The sequence spans 519 residues: Probable cytosol aminopeptidase (519 aa).

Positions 283 and 288 each coordinate Mn(2+). Residue K295 is part of the active site. The Mn(2+) site is built by D306, D365, and E367. Residue R369 is part of the active site.

The protein belongs to the peptidase M17 family. Requires Mn(2+) as cofactor.

Its subcellular location is the cytoplasm. It catalyses the reaction Release of an N-terminal amino acid, Xaa-|-Yaa-, in which Xaa is preferably Leu, but may be other amino acids including Pro although not Arg or Lys, and Yaa may be Pro. Amino acid amides and methyl esters are also readily hydrolyzed, but rates on arylamides are exceedingly low.. The catalysed reaction is Release of an N-terminal amino acid, preferentially leucine, but not glutamic or aspartic acids.. Presumably involved in the processing and regular turnover of intracellular proteins. Catalyzes the removal of unsubstituted N-terminal amino acids from various peptides. This is Probable cytosol aminopeptidase from Mycobacterium ulcerans (strain Agy99).